The chain runs to 500 residues: Pentatricopeptide repeat-containing protein At1g05750, chloroplastic (500 aa).

The transit peptide at 1-54 directs the protein to the chloroplast; sequence MGLLPVVGITSPALITHKNHANPKIQRHNQSTSETTVSWTSRINLLTRNGRLAE. PPR repeat units lie at residues 35–69, 70–106, 108–138, 139–173, 174–204, 205–239, 240–270, 271–305, 306–336, and 342–376; these read TTVSWTSRINLLTRNGRLAEAAKEFSDMTLAGVEP, NHITFIALLSGCGDFTSGSEALGDLLHGYACKLGLDR, HVMVGTAIIGMYSKRGRFKKARLVFDYMEDK, NSVTWNTMIDGYMRSGQVDNAAKMFDKMPERDLIS, WTAMINGFVKKGYQEEALLWFREMQISGVKP, DYVAIIAALNACTNLGALSFGLWVHRYVLSQDFKN, NVRVSNSLIDLYCRCGCVEFARQVFYNMEKR, TVVSWNSVIVGFAANGNAHESLVYFRKMQEKGFKP, DAVTFTGALTACSHVGLVEEGLRYFQIMKCD, and RIEHYGCLVDLYSRAGRLEDALKLVQSMPMKPNEV. Residues 377 to 453 are type E motif; it reads VIGSLLAACS…QPGFSSIEID (77 aa). Residues 454-484 are type E(+) motif; that stretch reads DCMHVFMAGDNAHVETTYIREVLELISSDLR.

The protein belongs to the PPR family. PCMP-E subfamily.

Its subcellular location is the plastid. The protein resides in the chloroplast. The sequence is that of Pentatricopeptide repeat-containing protein At1g05750, chloroplastic (PDE247) from Arabidopsis thaliana (Mouse-ear cress).